Reading from the N-terminus, the 574-residue chain is Phosphatidylinositol 4-kinase gamma 3 (574 aa).

Ubiquitin-like domains lie at 32 to 109 (PILV…SDLQ) and 110 to 188 (AISV…AKVR). In terms of domain architecture, PI3K/PI4K catalytic spans 257–555 (GNGPIRSSDG…IVPTETTEDE (299 aa)). Residues 263–269 (SSDGSGG) are G-loop. ATP contacts are provided by residues 264-270 (SDGSGGA), lysine 286, and 381-384 (QMFV). The tract at residues 414–422 (ANADRHAGN) is catalytic loop. The activation loop stretch occupies residues 438–464 (PIDHGYCFPNKFEDCTFEWLYWPQAKE). Aspartate 440 is a binding site for ATP.

The protein belongs to the PI3/PI4-kinase family. Type II PI4K subfamily.

The enzyme catalyses a 1,2-diacyl-sn-glycero-3-phospho-(1D-myo-inositol) + ATP = a 1,2-diacyl-sn-glycero-3-phospho-(1D-myo-inositol 4-phosphate) + ADP + H(+). In terms of biological role, the phosphorylation of phosphatidylinositol (PI) to PI4P is the first committed step in the generation of phosphatidylinositol 4,5-bisphosphate (PIP2), a precursor of the second messenger inositol 1,4,5-trisphosphate (InsP3). This chain is Phosphatidylinositol 4-kinase gamma 3 (PI4KG3), found in Arabidopsis thaliana (Mouse-ear cress).